Here is a 520-residue protein sequence, read N- to C-terminus: AarF domain-containing protein kinase 1 (520 aa).

The Protein kinase domain maps to glutamate 148–phenylalanine 455. ATP is bound by residues leucine 154–valine 162 and lysine 176. Residue aspartate 308 is the Proton acceptor of the active site.

Belongs to the protein kinase superfamily. ADCK protein kinase family.

The protein resides in the mitochondrion. Its function is as follows. Appears to be essential for maintaining mitochondrial cristae formation and mitochondrial function by acting via YME1L1 in a kinase-independent manner to regulate essential mitochondrial structural proteins OPA1 and IMMT. The action of this enzyme is not yet clear. It is not known if it has protein kinase activity and what type of substrate it would phosphorylate (Ser, Thr or Tyr). The sequence is that of AarF domain-containing protein kinase 1 (adck1) from Xenopus laevis (African clawed frog).